Consider the following 99-residue polypeptide: uncharacterized protein (99 aa).

Residues Phe74–Trp90 traverse the membrane as a helical segment.

The protein resides in the membrane. This is an uncharacterized protein from Saccharomyces cerevisiae (strain ATCC 204508 / S288c) (Baker's yeast).